Consider the following 483-residue polypeptide: Aspartyl/glutamyl-tRNA(Asn/Gln) amidotransferase subunit B (483 aa).

It belongs to the GatB/GatE family. GatB subfamily. As to quaternary structure, heterotrimer of A, B and C subunits.

The enzyme catalyses L-glutamyl-tRNA(Gln) + L-glutamine + ATP + H2O = L-glutaminyl-tRNA(Gln) + L-glutamate + ADP + phosphate + H(+). It carries out the reaction L-aspartyl-tRNA(Asn) + L-glutamine + ATP + H2O = L-asparaginyl-tRNA(Asn) + L-glutamate + ADP + phosphate + 2 H(+). In terms of biological role, allows the formation of correctly charged Asn-tRNA(Asn) or Gln-tRNA(Gln) through the transamidation of misacylated Asp-tRNA(Asn) or Glu-tRNA(Gln) in organisms which lack either or both of asparaginyl-tRNA or glutaminyl-tRNA synthetases. The reaction takes place in the presence of glutamine and ATP through an activated phospho-Asp-tRNA(Asn) or phospho-Glu-tRNA(Gln). The polypeptide is Aspartyl/glutamyl-tRNA(Asn/Gln) amidotransferase subunit B (Lachnospira eligens (strain ATCC 27750 / DSM 3376 / VPI C15-48 / C15-B4) (Eubacterium eligens)).